A 396-amino-acid polypeptide reads, in one-letter code: Pyruvate dehydrogenase E1 component subunit alpha type I, mitochondrial (396 aa).

The N-terminal 25 residues, Met-1 to Leu-25, are a transit peptide targeting the mitochondrion. 11 residues coordinate pyruvate: His-88, Tyr-114, Arg-115, Gly-153, Gly-161, Val-163, Asp-192, Gly-193, Ala-194, Asn-221, and Tyr-223. Thiamine diphosphate is bound by residues Tyr-114 and Arg-115. Residues Gly-161, Val-163, Asp-192, Gly-193, Ala-194, and Asn-221 each coordinate thiamine diphosphate. Residue Asp-192 participates in Mg(2+) binding. Mg(2+) is bound by residues Asn-221 and Tyr-223. His-288 contacts thiamine diphosphate. Phosphoserine is present on residues Ser-289 and Ser-296.

As to quaternary structure, heterotetramer of two PDHA1 and two PDHB subunits. The heterotetramer interacts with DLAT, and is part of the multimeric pyruvate dehydrogenase complex that contains multiple copies of pyruvate dehydrogenase (E1), dihydrolipoamide acetyltransferase (DLAT, E2) and lipoamide dehydrogenase (DLD, E3). Thiamine diphosphate serves as cofactor. The cofactor is Mg(2+).

The protein resides in the mitochondrion matrix. The enzyme catalyses N(6)-[(R)-lipoyl]-L-lysyl-[protein] + pyruvate + H(+) = N(6)-[(R)-S(8)-acetyldihydrolipoyl]-L-lysyl-[protein] + CO2. With respect to regulation, pyruvate dehydrogenase activity is inhibited by phosphorylation of PDHA1; it is reactivated by dephosphorylation. Its function is as follows. The pyruvate dehydrogenase complex catalyzes the overall conversion of pyruvate to acetyl-CoA and CO(2), and thereby links the glycolytic pathway to the tricarboxylic cycle. The chain is Pyruvate dehydrogenase E1 component subunit alpha type I, mitochondrial from Ascaris suum (Pig roundworm).